The sequence spans 206 residues: Small ribosomal subunit protein uS4 (206 aa).

In terms of domain architecture, S4 RNA-binding spans 98–158; the sequence is RRLDNVVFRL…EKSRSMELIK (61 aa).

The protein belongs to the universal ribosomal protein uS4 family. Part of the 30S ribosomal subunit. Contacts protein S5. The interaction surface between S4 and S5 is involved in control of translational fidelity.

One of the primary rRNA binding proteins, it binds directly to 16S rRNA where it nucleates assembly of the body of the 30S subunit. Functionally, with S5 and S12 plays an important role in translational accuracy. The protein is Small ribosomal subunit protein uS4 of Thermoanaerobacter pseudethanolicus (strain ATCC 33223 / 39E) (Clostridium thermohydrosulfuricum).